The following is a 1202-amino-acid chain: Voltage-gated inwardly rectifying potassium channel KCNH6 (1202 aa).

Residues 1 to 405 (MGSAALPHAR…YSPFKAVWDW (405 aa)) are Cytoplasmic-facing. The 49-residue stretch at 36–84 (IIYCNDGFCEMFGYSRVEVMQRPCTCDFLTGPDTTKSSIAQLTQALLGS) folds into the PAS domain. Positions 87–139 (CKLEILYYRKDTSCFRCLVDVVPVKNEDGVVIMFILNFEDLAQLIAKSSGRSL) constitute a PAC domain. 2 disordered regions span residues 203–243 (ENCV…LGPR) and 285–315 (ERRANSEGGMGLSGKASHVKPNPPNSTSDSD). Residues 213–222 (LLEKERRPSL) are compositionally biased toward basic and acidic residues. A helical membrane pass occupies residues 406–426 (LILLLVIYTAVFTPYSAAFLL). The Extracellular portion of the chain corresponds to 427-443 (NEEQGEEKHWNCSYSCD). N-linked (GlcNAc...) asparagine glycosylation is present at N437. Residues 444-464 (PLNIIDLIVDIMFIVDIVINF) traverse the membrane as a helical segment. The Cytoplasmic segment spans residues 465–485 (RTTYVNINDEVVSHPGKIAIH). The helical transmembrane segment at 486-506 (YFKGWFLIDMVAAIPFDLLIF) threads the bilayer. Residues 507 to 515 (RSGSDETTT) are Extracellular-facing. Residues 516–536 (LIGLLKTARLLRLVRVARKLD) traverse the membrane as a helical; Voltage-sensor segment. Residues 537–543 (RYSEYGA) are Cytoplasmic-facing. The chain crosses the membrane as a helical span at residues 544-564 (AVLFLLMCTFALIAHWLACIW). Topologically, residues 565–608 (YAIGNVERPYMEHKIGWLDNLGDQIGKRYNDSDLSSGPSIKDKY) are extracellular. N-linked (GlcNAc...) asparagine glycosylation is present at N594. Residues 609–629 (VTALYFTFSSLTSVGFGNVSP) constitute an intramembrane region (pore-forming). The short motif at 621 to 626 (SVGFGN) is the Selectivity filter element. The Extracellular segment spans residues 630-635 (NTNSEK). The chain crosses the membrane as a helical span at residues 636–656 (IFSICVMLIGSLMYASIFGNV). At 657–1202 (SAIIQRLYSG…HLSDPVLPGS (546 aa)) the chain is on the cytoplasmic side. Positions 739–839 (AFRGASKGCL…IQREDLLEVL (101 aa)) are cNMP-binding domain. 3 disordered regions span residues 912–948 (LTNPQDPLSKDQWDDVGSSTTPCSQTSDDEAKPGSPT), 1092–1112 (TPCAPLEDEQQTAPGQSPSYA), and 1140–1202 (TVYS…LPGS). A compositionally biased stretch (polar residues) spans 928 to 937 (GSSTTPCSQT). Residues 1179 to 1195 (EHLEASSEHQDIQRHLS) are compositionally biased toward basic and acidic residues.

Belongs to the potassium channel family. H (Eag) (TC 1.A.1.20) subfamily. Kv11.2/KCNH6 sub-subfamily. The potassium channel is probably composed of a homo- or heterotetrameric complex of pore-forming alpha subunits that can associate only within their subfamily.

The protein resides in the cell membrane. It carries out the reaction K(+)(in) = K(+)(out). In terms of biological role, pore-forming (alpha) subunit of voltage-gated inwardly rectifying potassium channel. Characterized by unusual gating kinetics by producing relatively small outward currents during membrane depolarization and large inward currents during subsequent repolarization which reflect a rapid inactivation during depolarization and quick recovery from inactivation but slow deactivation (closing) during repolarization. Activates even more slowly than KCNH2. The polypeptide is Voltage-gated inwardly rectifying potassium channel KCNH6 (Gallus gallus (Chicken)).